The following is a 296-amino-acid chain: Fructose-bisphosphate aldolase class 1 (296 aa).

Residue Glu-175 is the Proton acceptor of the active site. The active-site Schiff-base intermediate with dihydroxyacetone-P is the Lys-212.

This sequence belongs to the class I fructose-bisphosphate aldolase family.

It catalyses the reaction beta-D-fructose 1,6-bisphosphate = D-glyceraldehyde 3-phosphate + dihydroxyacetone phosphate. Its pathway is carbohydrate degradation; glycolysis; D-glyceraldehyde 3-phosphate and glycerone phosphate from D-glucose: step 4/4. The protein is Fructose-bisphosphate aldolase class 1 of Staphylococcus epidermidis (strain ATCC 35984 / DSM 28319 / BCRC 17069 / CCUG 31568 / BM 3577 / RP62A).